We begin with the raw amino-acid sequence, 132 residues long: ATP synthase epsilon chain 1 (132 aa).

This sequence belongs to the ATPase epsilon chain family. F-type ATPases have 2 components, CF(1) - the catalytic core - and CF(0) - the membrane proton channel. CF(1) has five subunits: alpha(3), beta(3), gamma(1), delta(1), epsilon(1). CF(0) has three main subunits: a, b and c.

Its subcellular location is the cell inner membrane. In terms of biological role, produces ATP from ADP in the presence of a proton gradient across the membrane. The protein is ATP synthase epsilon chain 1 of Cereibacter sphaeroides (strain ATCC 17023 / DSM 158 / JCM 6121 / CCUG 31486 / LMG 2827 / NBRC 12203 / NCIMB 8253 / ATH 2.4.1.) (Rhodobacter sphaeroides).